Consider the following 264-residue polypeptide: Thymidylate synthase (264 aa).

Residues Arg-21 and Arg-126 to Arg-127 contribute to the dUMP site. Cys-146 acts as the Nucleophile in catalysis. Residues Arg-166–Asp-169, Asn-177, and His-207–Tyr-209 contribute to the dUMP site. Asp-169 provides a ligand contact to (6R)-5,10-methylene-5,6,7,8-tetrahydrofolate. Ala-263 provides a ligand contact to (6R)-5,10-methylene-5,6,7,8-tetrahydrofolate.

This sequence belongs to the thymidylate synthase family. Bacterial-type ThyA subfamily. Homodimer.

The protein resides in the cytoplasm. The catalysed reaction is dUMP + (6R)-5,10-methylene-5,6,7,8-tetrahydrofolate = 7,8-dihydrofolate + dTMP. It participates in pyrimidine metabolism; dTTP biosynthesis. Its function is as follows. Catalyzes the reductive methylation of 2'-deoxyuridine-5'-monophosphate (dUMP) to 2'-deoxythymidine-5'-monophosphate (dTMP) while utilizing 5,10-methylenetetrahydrofolate (mTHF) as the methyl donor and reductant in the reaction, yielding dihydrofolate (DHF) as a by-product. This enzymatic reaction provides an intracellular de novo source of dTMP, an essential precursor for DNA biosynthesis. The protein is Thymidylate synthase of Bradyrhizobium sp. (strain BTAi1 / ATCC BAA-1182).